The chain runs to 566 residues: Probable F-box protein At5g39490 (566 aa).

The region spanning 8–54 is the F-box domain; sequence ACLLLMLPEDIFVVISRFLSPSDICNLILCGKSLRALVDSEKTWLVQ. A disordered region spans residues 318-338; the sequence is LRKSSSSKNTTPSQSEIRHSN. Low complexity predominate over residues 320 to 332; sequence KSSSSKNTTPSQS.

The polypeptide is Probable F-box protein At5g39490 (Arabidopsis thaliana (Mouse-ear cress)).